A 131-amino-acid polypeptide reads, in one-letter code: D-ribose pyranase (131 aa).

The active-site Proton donor is the His-20. Residues Asp-28, His-98, and 120-122 (YAN) each bind substrate.

This sequence belongs to the RbsD / FucU family. RbsD subfamily. In terms of assembly, homodecamer.

The protein resides in the cytoplasm. It catalyses the reaction beta-D-ribopyranose = beta-D-ribofuranose. It participates in carbohydrate metabolism; D-ribose degradation; D-ribose 5-phosphate from beta-D-ribopyranose: step 1/2. In terms of biological role, catalyzes the interconversion of beta-pyran and beta-furan forms of D-ribose. The protein is D-ribose pyranase of Symbiobacterium thermophilum (strain DSM 24528 / JCM 14929 / IAM 14863 / T).